Consider the following 355-residue polypeptide: NADH dehydrogenase [ubiquinone] 1 alpha subcomplex subunit 10, mitochondrial (355 aa).

The transit peptide at Met-1–Lys-35 directs the protein to the mitochondrion. Residue Ser-250 is modified to Phosphoserine; by PINK1. Lys-285 carries the N6-succinyllysine modification.

It belongs to the complex I NDUFA10 subunit family. As to quaternary structure, complex I is composed of 45 different subunits. This a component of the hydrophobic protein fraction. FAD serves as cofactor. In terms of processing, phosphorylation at Ser-250 by PINK1 is required for the binding and/or reduction of the complex I substrate ubiquinone.

The protein resides in the mitochondrion matrix. Functionally, accessory subunit of the mitochondrial membrane respiratory chain NADH dehydrogenase (Complex I), that is believed not to be involved in catalysis. Complex I functions in the transfer of electrons from NADH to the respiratory chain. The immediate electron acceptor for the enzyme is believed to be ubiquinone. The chain is NADH dehydrogenase [ubiquinone] 1 alpha subcomplex subunit 10, mitochondrial (NDUFA10) from Homo sapiens (Human).